Consider the following 234-residue polypeptide: Ubiquitin domain-containing protein 2 (234 aa).

The interval 1-46 is disordered; that stretch reads MGGCVGAQHDSSGSLNENSEGTGVALGRNQPLKKEKPKWKSDYPMT. The span at 9-21 shows a compositional bias: polar residues; it reads HDSSGSLNENSEG. Residues 32–41 show a composition bias toward basic and acidic residues; the sequence is LKKEKPKWKS. Positions 152–227 constitute a Ubiquitin-like domain; sequence SQLRLRLSTG…VQVIMSQPLQ (76 aa).

The protein localises to the cytoplasm. This Bos taurus (Bovine) protein is Ubiquitin domain-containing protein 2 (UBTD2).